Reading from the N-terminus, the 384-residue chain is Cyanate transport protein CynX (384 aa).

Helical transmembrane passes span L3–L23, F34–A54, V68–S88, A89–M109, P122–I142, W153–W173, Y204–I224, S235–A255, L263–M283, V287–L307, V322–V342, and W354–V374.

It belongs to the major facilitator superfamily. Cyanate porter (TC 2.A.1.17) family.

The protein resides in the cell inner membrane. Its function is as follows. This protein is part of an active transport system that transports exogenous cyanate into E.coli cells. The chain is Cyanate transport protein CynX (cynX) from Escherichia coli (strain K12).